Here is a 95-residue protein sequence, read N- to C-terminus: Small ribosomal subunit protein bS20 (95 aa).

Disordered regions lie at residues 1 to 26 and 76 to 95; these read MALRHKSAQKRHRQSLKRRLINRSRK and KSRLAKALNKAKAAQAAQPA. Residues 80 to 95 are compositionally biased toward low complexity; the sequence is AKALNKAKAAQAAQPA.

Belongs to the bacterial ribosomal protein bS20 family.

In terms of biological role, binds directly to 16S ribosomal RNA. The polypeptide is Small ribosomal subunit protein bS20 (Deinococcus geothermalis (strain DSM 11300 / CIP 105573 / AG-3a)).